The following is a 251-amino-acid chain: uncharacterized protein (251 aa).

The RING-type zinc finger occupies 192–238 (CMMCVQRGDERVAITTPYTTDCGHTYCYACIMSRLKLVNNVSCPICK).

It is found in the cytoplasm. This is an uncharacterized protein from Schizosaccharomyces pombe (strain 972 / ATCC 24843) (Fission yeast).